The sequence spans 289 residues: Glucose and ribitol dehydrogenase homolog 2 (289 aa).

The tract at residues M1–K32 is disordered. Residue L43–A67 participates in NAD(+) binding. Residue S180 participates in substrate binding. The Proton acceptor role is filled by Y193.

Belongs to the short-chain dehydrogenases/reductases (SDR) family.

May act as a short alcohol-polyol-sugar dehydrogenase possibly related to carbohydrate metabolism and the acquisition of desiccation tolerance. May also be involved in signal transduction. The sequence is that of Glucose and ribitol dehydrogenase homolog 2 from Arabidopsis thaliana (Mouse-ear cress).